Here is a 297-residue protein sequence, read N- to C-terminus: D-aminoacyl-tRNA deacylase (297 aa).

This sequence belongs to the DtdA deacylase family. Monomer. Zn(2+) is required as a cofactor.

It catalyses the reaction a D-aminoacyl-tRNA + H2O = a tRNA + a D-alpha-amino acid + H(+). The enzyme catalyses glycyl-tRNA(Ala) + H2O = tRNA(Ala) + glycine + H(+). In terms of biological role, D-aminoacyl-tRNA deacylase with broad substrate specificity. By recycling D-aminoacyl-tRNA to D-amino acids and free tRNA molecules, this enzyme counteracts the toxicity associated with the formation of D-aminoacyl-tRNA entities in vivo. The chain is D-aminoacyl-tRNA deacylase from Methanosarcina mazei (strain ATCC BAA-159 / DSM 3647 / Goe1 / Go1 / JCM 11833 / OCM 88) (Methanosarcina frisia).